The sequence spans 280 residues: MIHFTKMHGLGNDFMVVDGVTQNVFFSPEQIKRLADRNFGIGFDQLLLVEPPYDPDLDFHYRIFNADGGEVEQCGNGARCFARFVRNKGLTNKQKIRVSTSNGKITLRLERDGNVTVNMGIPVLEPGRIPFNAKKMEKTYLLQATNPDSTMQTFLFGAVSMGNPHCVLDVEDIEAADVEGIGALLTRHERFPKGVNVGFMQIINSGHIKLRVYERGAAETLACGTGACAAAVVGQLQGKLDNCVRVDLPGGTLTINWEGEGKPLWMTGPAEHVYDGQIQQ.

Residues Asn-12, Gln-45, and Asn-65 each contribute to the substrate site. Residue Cys-74 is the Proton donor of the active site. Residues 75–76 (GN), Asn-163, Asn-196, and 214–215 (ER) contribute to the substrate site. The active-site Proton acceptor is the Cys-223. Substrate is bound at residue 224-225 (GT).

This sequence belongs to the diaminopimelate epimerase family. As to quaternary structure, homodimer.

It is found in the cytoplasm. The catalysed reaction is (2S,6S)-2,6-diaminopimelate = meso-2,6-diaminopimelate. Its pathway is amino-acid biosynthesis; L-lysine biosynthesis via DAP pathway; DL-2,6-diaminopimelate from LL-2,6-diaminopimelate: step 1/1. Catalyzes the stereoinversion of LL-2,6-diaminopimelate (L,L-DAP) to meso-diaminopimelate (meso-DAP), a precursor of L-lysine and an essential component of the bacterial peptidoglycan. This chain is Diaminopimelate epimerase, found in Shewanella sediminis (strain HAW-EB3).